Reading from the N-terminus, the 258-residue chain is Regulatory protein RecX (258 aa).

The protein belongs to the RecX family.

Its subcellular location is the cytoplasm. Its function is as follows. Modulates RecA activity. The sequence is that of Regulatory protein RecX from Streptococcus pneumoniae (strain P1031).